The following is a 97-amino-acid chain: NADH-ubiquinone oxidoreductase chain 4L (97 aa).

Transmembrane regions (helical) follow at residues 1-21 (MALLIIILSMFYLGLMGILLN), 23-43 (LHFLSILLCLELLLISLFIGI), and 60-80 (LLLLTLSACEASIGLSLMVAL).

Belongs to the complex I subunit 4L family.

The protein resides in the mitochondrion membrane. The catalysed reaction is a ubiquinone + NADH + 5 H(+)(in) = a ubiquinol + NAD(+) + 4 H(+)(out). Functionally, core subunit of the mitochondrial membrane respiratory chain NADH dehydrogenase (Complex I) that is believed to belong to the minimal assembly required for catalysis. Complex I functions in the transfer of electrons from NADH to the respiratory chain. The immediate electron acceptor for the enzyme is believed to be ubiquinone. In Paracentrotus lividus (Common sea urchin), this protein is NADH-ubiquinone oxidoreductase chain 4L (ND4L).